Reading from the N-terminus, the 60-residue chain is Large ribosomal subunit protein uL30 (60 aa).

It belongs to the universal ribosomal protein uL30 family. In terms of assembly, part of the 50S ribosomal subunit.

The protein is Large ribosomal subunit protein uL30 of Levilactobacillus brevis (strain ATCC 367 / BCRC 12310 / CIP 105137 / JCM 1170 / LMG 11437 / NCIMB 947 / NCTC 947) (Lactobacillus brevis).